A 243-amino-acid polypeptide reads, in one-letter code: Orotidine 5'-phosphate decarboxylase (243 aa).

Substrate contacts are provided by residues Asp16, Lys38, 65-74 (DLKLHDIPNT), Thr120, Arg181, Gln190, Gly210, and Arg211. Lys67 (proton donor) is an active-site residue.

The protein belongs to the OMP decarboxylase family. Type 1 subfamily. As to quaternary structure, homodimer.

The catalysed reaction is orotidine 5'-phosphate + H(+) = UMP + CO2. The protein operates within pyrimidine metabolism; UMP biosynthesis via de novo pathway; UMP from orotate: step 2/2. In terms of biological role, catalyzes the decarboxylation of orotidine 5'-monophosphate (OMP) to uridine 5'-monophosphate (UMP). The sequence is that of Orotidine 5'-phosphate decarboxylase from Bradyrhizobium sp. (strain ORS 278).